Here is a 360-residue protein sequence, read N- to C-terminus: Casein kinase II subunit alpha (360 aa).

One can recognise a Protein kinase domain in the interval 38 to 323 (YQLVRKLGRG…AQEAMGHEYF (286 aa)). Residues 44–52 (LGRGKYSEV) and Lys-67 contribute to the ATP site. Asp-155 serves as the catalytic Proton acceptor. The tract at residues 334 to 360 (NGTEQADGQGASNSASSQSSDAKIDGA) is disordered. The span at 338–354 (QADGQGASNSASSQSSD) shows a compositional bias: low complexity.

The protein belongs to the protein kinase superfamily. Ser/Thr protein kinase family. CK2 subfamily. As to quaternary structure, tetramer of two alpha and two beta chains. As to expression, expressed in a subset of the adult male sensory neurons: CEM head neurons, ray RnB neurons, and hook HOB tail neurons.

The protein localises to the cell projection. Its subcellular location is the axon. It is found in the cilium. The protein resides in the dendrite. It localises to the perikaryon. It catalyses the reaction L-seryl-[protein] + ATP = O-phospho-L-seryl-[protein] + ADP + H(+). It carries out the reaction L-threonyl-[protein] + ATP = O-phospho-L-threonyl-[protein] + ADP + H(+). Functionally, casein kinases are operationally defined by their preferential utilization of acidic proteins such as caseins as substrates. The alpha chain contains the catalytic site. May participate in Wnt signaling. Modulates two aspects of male mating behavior; response to hermaphrodite contact and vulval location, acting in the same pathway as lov-1 and pkd-2. The chain is Casein kinase II subunit alpha (kin-3) from Caenorhabditis elegans.